A 133-amino-acid chain; its full sequence is Small ribosomal subunit protein uS8 (133 aa).

It belongs to the universal ribosomal protein uS8 family. As to quaternary structure, part of the 30S ribosomal subunit. Contacts proteins S5 and S12.

Its function is as follows. One of the primary rRNA binding proteins, it binds directly to 16S rRNA central domain where it helps coordinate assembly of the platform of the 30S subunit. This is Small ribosomal subunit protein uS8 from Trichodesmium erythraeum (strain IMS101).